A 390-amino-acid chain; its full sequence is EF-hand calcium-binding domain-containing protein 4A (390 aa).

Positions 1-27 are enriched in low complexity; the sequence is MSPRSTLRSPLPSRTARSSASSDTPSP. A disordered region spans residues 1–37; that stretch reads MSPRSTLRSPLPSRTARSSASSDTPSPGADRQDRMSK. EF-hand domains follow at residues 33–66 and 67–102; these read DRMS…QELP and LSPE…LVGS. Residues D80, D82, N84, Y86, and E91 each coordinate Ca(2+). Residues 173-357 are a coiled coil; the sequence is SHLQDALKEK…DDKDAHQAQK (185 aa). The segment at 206-234 is disordered; the sequence is DMESQLKEERERRQALDSMRQGDKKEQLL.

This sequence belongs to the EFCAB4 family.

The polypeptide is EF-hand calcium-binding domain-containing protein 4A (cracr2b) (Danio rerio (Zebrafish)).